The following is a 42-amino-acid chain: Photosystem II reaction center protein J (42 aa).

Residues I10 to F30 traverse the membrane as a helical segment.

The protein belongs to the PsbJ family. PSII is composed of 1 copy each of membrane proteins PsbA, PsbB, PsbC, PsbD, PsbE, PsbF, PsbH, PsbI, PsbJ, PsbK, PsbL, PsbM, PsbT, PsbX, PsbY, PsbZ, Psb30/Ycf12, at least 3 peripheral proteins of the oxygen-evolving complex and a large number of cofactors. It forms dimeric complexes.

The protein resides in the plastid. It is found in the chloroplast thylakoid membrane. Functionally, one of the components of the core complex of photosystem II (PSII). PSII is a light-driven water:plastoquinone oxidoreductase that uses light energy to abstract electrons from H(2)O, generating O(2) and a proton gradient subsequently used for ATP formation. It consists of a core antenna complex that captures photons, and an electron transfer chain that converts photonic excitation into a charge separation. In Staurastrum punctulatum (Green alga), this protein is Photosystem II reaction center protein J.